We begin with the raw amino-acid sequence, 361 residues long: G-protein coupled receptor 183 (361 aa).

Residues 1–31 (MDIQMANNFTPPSATPQGNDCDLYAHHSTAR) lie on the Extracellular side of the membrane. A helical membrane pass occupies residues 32 to 57 (IVMPLHYSLVFIIGLVGNLLALVVIV). The Cytoplasmic portion of the chain corresponds to 58–77 (QNRKKINSTTLYSTNLVISD). The helical transmembrane segment at 78 to 95 (ILFTTALPTRIAYYAMGF) threads the bilayer. Residue R87 participates in 7alpha,25-dihydroxycholesterol binding. Over 96 to 105 (DWRIGDALCR) the chain is Extracellular. C104 and C181 are disulfide-bonded. Residues 106–127 (ITALVFYINTYAGVNFMTCLSI) form a helical membrane-spanning segment. 7alpha,25-dihydroxycholesterol contacts are provided by Y112 and Y116. The interaction with G proteins stretch occupies residues 126-134 (SIDRFIAVV). Over 128-149 (DRFIAVVHPLRYNKIKRIEHAK) the chain is Cytoplasmic. The helical transmembrane segment at 150–168 (GVCIFVWILVFAQTLPLLI) threads the bilayer. The Extracellular portion of the chain corresponds to 169-192 (NPMSKQEAERITCMEYPNFEETKS). Residues 193–215 (LPWILLGACFIGYVLPLIIILIC) traverse the membrane as a helical segment. Over 216–241 (YSQICCKLFRTAKQNPLTEKSGVNKK) the chain is Cytoplasmic. The helical transmembrane segment at 242–265 (ALNTIILIIVVFVLCFTPYHVAII) threads the bilayer. Y260 is a 7alpha,25-dihydroxycholesterol binding site. Over 266–287 (QHMIKKLRFSNFLECSQRHSFQ) the chain is Extracellular. A helical membrane pass occupies residues 288–312 (ISLHFTVCLMNFNCCMDPFIYFFAC). The Cytoplasmic segment spans residues 313 to 361 (KGYKRKVMRMLKRQVSVSISSAVKSAPEENSREMTETQMMIHSKSSNGK). Phosphoserine is present on S328. The segment at 340 to 361 (EENSREMTETQMMIHSKSSNGK) is disordered. The span at 348–361 (ETQMMIHSKSSNGK) shows a compositional bias: polar residues.

This sequence belongs to the G-protein coupled receptor 1 family. Homodimer and heterodimer. Heterodimerizes with CXCR5; leading to modulate the interaction between of CXCL13 and CXCR5. In terms of tissue distribution, expressed abundantly in lymphoid tissues such as spleen and lymph node, and in B- and T-lymphocytes. Also highly expressed in lung, heart and gastrointestinal tract, and weakly expressed in the urogenital system and brain. Expressed in astrocytes.

It is found in the cell membrane. In terms of biological role, G-protein coupled receptor expressed in lymphocytes that acts as a chemotactic receptor for B-cells, T-cells, splenic dendritic cells, monocytes/macrophages and astrocytes. Receptor for oxysterol 7-alpha,25-dihydroxycholesterol (7-alpha,25-OHC) and other related oxysterols. Mediates cell positioning and movement of a number of cells by binding the 7-alpha,25-OHC ligand that forms a chemotactic gradient. Binding of 7-alpha,25-OHC mediates the correct localization of B-cells during humoral immune responses. Guides B-cell movement along the B-cell zone-T-cell zone boundary and later to interfollicular and outer follicular regions. Its specific expression during B-cell maturation helps position B-cells appropriately for mounting T-dependent antibody responses. Collaborates with CXCR5 to mediate B-cell migration; probably by forming a heterodimer with CXCR5 that affects the interaction between of CXCL13 and CXCR5. Also acts as a chemotactic receptor for some T-cells upon binding to 7-alpha,25-OHC ligand. Promotes follicular helper T (Tfh) cells differentiation by positioning activated T-cells at the follicle-T-zone interface, promoting contact of newly activated CD4 T-cells with activated dendritic cells and exposing them to Tfh-cell-promoting inducible costimulator (ICOS) ligand. Expression in splenic dendritic cells is required for their homeostasis, localization and ability to induce B- and T-cell responses: GPR183 acts as a chemotactic receptor in dendritic cells that mediates the accumulation of CD4(+) dendritic cells in bridging channels. Regulates migration of astrocytes and is involved in communication between astrocytes and macrophages. Promotes osteoclast precursor migration to bone surfaces. Signals constitutively through G(i)-alpha, but not G(s)-alpha or G(q)-alpha. Signals constitutively also via MAPK1/3 (ERK1/2). This Homo sapiens (Human) protein is G-protein coupled receptor 183.